A 245-amino-acid polypeptide reads, in one-letter code: Orotidine 5'-phosphate decarboxylase (245 aa).

Substrate-binding positions include Asp-22, Lys-44, 71-80, Thr-131, Arg-192, Gln-201, Gly-221, and Arg-222; that span reads DLKFHDIPNT. The active-site Proton donor is the Lys-73.

The protein belongs to the OMP decarboxylase family. Type 1 subfamily. In terms of assembly, homodimer.

It carries out the reaction orotidine 5'-phosphate + H(+) = UMP + CO2. It participates in pyrimidine metabolism; UMP biosynthesis via de novo pathway; UMP from orotate: step 2/2. Its function is as follows. Catalyzes the decarboxylation of orotidine 5'-monophosphate (OMP) to uridine 5'-monophosphate (UMP). The sequence is that of Orotidine 5'-phosphate decarboxylase from Shigella boydii serotype 18 (strain CDC 3083-94 / BS512).